The chain runs to 131 residues: Bacteriohemerythrin (131 aa).

8 residues coordinate Fe cation: H20, E23, H56, E60, H75, H79, H117, and D122.

Belongs to the hemerythrin family. Monomer.

Oxygen-binding protein. May be involved in a storage mechanism or for delivery to oxygen-requiring enzymes. The oxygen-binding site contains two iron atoms. This is Bacteriohemerythrin from Aquifex aeolicus (strain VF5).